A 196-amino-acid chain; its full sequence is Large ribosomal subunit protein eL15 (196 aa).

The interval 155–196 (THRGRAERGLTSAGKKGRGQRRKGKGTEKNYPSVQAHDRRGK) is disordered. Residues 169–178 (KKGRGQRRKG) are compositionally biased toward basic residues.

It belongs to the eukaryotic ribosomal protein eL15 family.

In Methanocella arvoryzae (strain DSM 22066 / NBRC 105507 / MRE50), this protein is Large ribosomal subunit protein eL15.